The primary structure comprises 179 residues: Peroxiredoxin (179 aa).

One can recognise a Thioredoxin domain in the interval 2–152; the sequence is TMEKQVPIVT…VEGWFEEEGF (151 aa). Cys-56 functions as the Cysteine sulfenic acid (-SOH) intermediate (for peroxiredoxin activity) in the catalytic mechanism.

It belongs to the peroxiredoxin family. Prx5 subfamily. Monomer.

It carries out the reaction a hydroperoxide + 2 glutathione = an alcohol + glutathione disulfide + H2O. In terms of biological role, thiol-specific peroxidase that catalyzes the reduction of hydrogen peroxide and organic hydroperoxides to water and alcohols, respectively. Plays a role in cell protection against oxidative stress by detoxifying peroxides. In Rhizobium etli, this protein is Peroxiredoxin.